A 72-amino-acid chain; its full sequence is Multiple antibiotic resistance protein MarB (72 aa).

The polypeptide is Multiple antibiotic resistance protein MarB (marB) (Escherichia coli (strain K12)).